The primary structure comprises 87 residues: MKIRKILLSSALSFGMLISAVPALAAGTSSEVAVKNEEYDYDTIYRISPLPMDFQPTIEYNGYTYTLTRHYFDYSIGFYTAIYTKVV.

The N-terminal stretch at 1–25 (MKIRKILLSSALSFGMLISAVPALA) is a signal peptide.

This is an uncharacterized protein from Bacillus subtilis (strain 168).